We begin with the raw amino-acid sequence, 318 residues long: Replication factor C small subunit (318 aa).

43–50 is a binding site for ATP; it reads GSVGTGKT.

This sequence belongs to the activator 1 small subunits family. RfcS subfamily. In terms of assembly, heteromultimer composed of small subunits (RfcS) and large subunits (RfcL).

Part of the RFC clamp loader complex which loads the PCNA sliding clamp onto DNA. The sequence is that of Replication factor C small subunit from Thermoplasma volcanium (strain ATCC 51530 / DSM 4299 / JCM 9571 / NBRC 15438 / GSS1).